The following is a 156-amino-acid chain: Transcription antitermination protein NusB (156 aa).

This sequence belongs to the NusB family.

Its function is as follows. Involved in transcription antitermination. Required for transcription of ribosomal RNA (rRNA) genes. Binds specifically to the boxA antiterminator sequence of the ribosomal RNA (rrn) operons. In Bartonella quintana (strain Toulouse) (Rochalimaea quintana), this protein is Transcription antitermination protein NusB.